A 388-amino-acid chain; its full sequence is UDP-N-acetylglucosamine--N-acetylmuramyl-(pentapeptide) pyrophosphoryl-undecaprenol N-acetylglucosamine transferase (388 aa).

UDP-N-acetyl-alpha-D-glucosamine-binding positions include 15 to 17 (TGG), Asn-125, Arg-168, Ser-196, and Gln-297.

Belongs to the glycosyltransferase 28 family. MurG subfamily.

Its subcellular location is the cell inner membrane. It carries out the reaction di-trans,octa-cis-undecaprenyl diphospho-N-acetyl-alpha-D-muramoyl-L-alanyl-D-glutamyl-meso-2,6-diaminopimeloyl-D-alanyl-D-alanine + UDP-N-acetyl-alpha-D-glucosamine = di-trans,octa-cis-undecaprenyl diphospho-[N-acetyl-alpha-D-glucosaminyl-(1-&gt;4)]-N-acetyl-alpha-D-muramoyl-L-alanyl-D-glutamyl-meso-2,6-diaminopimeloyl-D-alanyl-D-alanine + UDP + H(+). It participates in cell wall biogenesis; peptidoglycan biosynthesis. Cell wall formation. Catalyzes the transfer of a GlcNAc subunit on undecaprenyl-pyrophosphoryl-MurNAc-pentapeptide (lipid intermediate I) to form undecaprenyl-pyrophosphoryl-MurNAc-(pentapeptide)GlcNAc (lipid intermediate II). This chain is UDP-N-acetylglucosamine--N-acetylmuramyl-(pentapeptide) pyrophosphoryl-undecaprenol N-acetylglucosamine transferase, found in Novosphingobium aromaticivorans (strain ATCC 700278 / DSM 12444 / CCUG 56034 / CIP 105152 / NBRC 16084 / F199).